Reading from the N-terminus, the 317-residue chain is 2,3-dihydroxyphenylpropionate/2,3-dihydroxicinnamic acid 1,2-dioxygenase (317 aa).

His115 functions as the Proton donor in the catalytic mechanism. Catalysis depends on His179, which acts as the Proton acceptor.

This sequence belongs to the LigB/MhpB extradiol dioxygenase family. As to quaternary structure, homotetramer. Requires Fe(2+) as cofactor.

The catalysed reaction is 3-(2,3-dihydroxyphenyl)propanoate + O2 = (2Z,4E)-2-hydroxy-6-oxonona-2,4-dienedioate + H(+). It carries out the reaction (2E)-3-(2,3-dihydroxyphenyl)prop-2-enoate + O2 = (2Z,4E,7E)-2-hydroxy-6-oxonona-2,4,7-trienedioate + H(+). It functions in the pathway aromatic compound metabolism; 3-phenylpropanoate degradation. Its function is as follows. Catalyzes the non-heme iron(II)-dependent oxidative cleavage of 2,3-dihydroxyphenylpropionic acid and 2,3-dihydroxicinnamic acid into 2-hydroxy-6-ketononadienedioate and 2-hydroxy-6-ketononatrienedioate, respectively. The protein is 2,3-dihydroxyphenylpropionate/2,3-dihydroxicinnamic acid 1,2-dioxygenase of Photorhabdus laumondii subsp. laumondii (strain DSM 15139 / CIP 105565 / TT01) (Photorhabdus luminescens subsp. laumondii).